The chain runs to 377 residues: MNLLKPAVKPPSWLLAELTYRCPVQCPYWSNPLDFAKQEKELTTAQWIKVFEEAREMGAVQIGFSGGEPLVRKDLPELIRGARDLGFYTNLITSGIGLTEKKIDAFAQAGLDHIQISFQASDEELNAALAGNAKAFQQKLAMAKAVKAHGYPMVLNFVLHRHNIDQIDKIIDLSIELDADDVELATCQFYGWAQLNREGLLPTREQIARAEDVVHQYREKMAGTGNLANLLFVTPDYYEERPKGCMGGWGAIFLSVTPEGMALPCHSARQLPVEFPSVLENTLQEIWYDSFGFNKYRGFDWMPEPCRSCSEKEKDFGGCRCQAFMLTGNADNADPVCSKSEHHGMILAAREQANCTNIQINQLQFRNRANSQLIFKG.

A Radical SAM core domain is found at 8 to 224 (VKPPSWLLAE…HQYREKMAGT (217 aa)). [4Fe-4S] cluster-binding residues include C22 and C26.

This sequence belongs to the radical SAM superfamily. PqqE family. Interacts with PqqD. The interaction is necessary for activity of PqqE. [4Fe-4S] cluster serves as cofactor.

The catalysed reaction is [PQQ precursor protein] + S-adenosyl-L-methionine = E-Y cross-linked-[PQQ precursor protein] + 5'-deoxyadenosine + L-methionine + H(+). Its pathway is cofactor biosynthesis; pyrroloquinoline quinone biosynthesis. Its function is as follows. Catalyzes the cross-linking of a glutamate residue and a tyrosine residue in the PqqA protein as part of the biosynthesis of pyrroloquinoline quinone (PQQ). This chain is PqqA peptide cyclase (pqqE), found in Rahnella aquatilis.